A 315-amino-acid polypeptide reads, in one-letter code: Biotin synthase (315 aa).

Positions 39–266 (NSLQFATLLS…KSAIRLTAGR (228 aa)) constitute a Radical SAM core domain. The [4Fe-4S] cluster site is built by cysteine 54, cysteine 58, and cysteine 61. [2Fe-2S] cluster contacts are provided by cysteine 98, cysteine 129, cysteine 189, and arginine 261.

It belongs to the radical SAM superfamily. Biotin synthase family. As to quaternary structure, homodimer. [4Fe-4S] cluster is required as a cofactor. Requires [2Fe-2S] cluster as cofactor.

The enzyme catalyses (4R,5S)-dethiobiotin + (sulfur carrier)-SH + 2 reduced [2Fe-2S]-[ferredoxin] + 2 S-adenosyl-L-methionine = (sulfur carrier)-H + biotin + 2 5'-deoxyadenosine + 2 L-methionine + 2 oxidized [2Fe-2S]-[ferredoxin]. It functions in the pathway cofactor biosynthesis; biotin biosynthesis; biotin from 7,8-diaminononanoate: step 2/2. Its function is as follows. Catalyzes the conversion of dethiobiotin (DTB) to biotin by the insertion of a sulfur atom into dethiobiotin via a radical-based mechanism. In Legionella pneumophila (strain Corby), this protein is Biotin synthase.